Here is a 92-residue protein sequence, read N- to C-terminus: Small ribosomal subunit protein uS19 (92 aa).

The protein belongs to the universal ribosomal protein uS19 family.

In terms of biological role, protein S19 forms a complex with S13 that binds strongly to the 16S ribosomal RNA. The protein is Small ribosomal subunit protein uS19 of Mycoplasmopsis synoviae (strain 53) (Mycoplasma synoviae).